We begin with the raw amino-acid sequence, 253 residues long: POU Class 2 homeobox-associating factor 3 (253 aa).

The 23-residue stretch at 5–27 (PKVYQGVRVKMTVKELLQQRRAH) folds into the OCA domain.

It belongs to the POU2AF family. Interacts with POU2F3 in a DNA-dependent manner; this interaction increases POU2F3 transactivation activity. As to expression, expressed in tuft cells.

The protein localises to the cytoplasm. The protein resides in the nucleus. Functionally, transcriptional coactivator that specifically associates with POU2F3. This complex drives the development of tuft cells, a rare a rare chemosensory cells that coordinate immune and neural functions within mucosal epithelial tissues. In Mus musculus (Mouse), this protein is POU Class 2 homeobox-associating factor 3.